The primary structure comprises 144 residues: NADH-ubiquinone oxidoreductase chain 6 (144 aa).

5 helical membrane passes run 1–21, 25–45, 46–66, 75–95, and 108–128; these read MIKLFFVLAIFSSIISYMNID, SSFFLIFSLLFSMPIISMSMH, IWFSYFICLLFLSGIFVILVY, VVKSYMSLFLLLISIIYFSPV, and FYYSIYWFIFSFILICLLFFM.

Belongs to the complex I subunit 6 family.

Its subcellular location is the mitochondrion membrane. The enzyme catalyses a ubiquinone + NADH + 5 H(+)(in) = a ubiquinol + NAD(+) + 4 H(+)(out). Core subunit of the mitochondrial membrane respiratory chain NADH dehydrogenase (Complex I) that is believed to belong to the minimal assembly required for catalysis. Complex I functions in the transfer of electrons from NADH to the respiratory chain. The immediate electron acceptor for the enzyme is believed to be ubiquinone. The polypeptide is NADH-ubiquinone oxidoreductase chain 6 (nd6) (Caenorhabditis briggsae).